The chain runs to 148 residues: Ribonuclease H (148 aa).

The RNase H type-1 domain maps to 1-142 (MSDSVELYTD…ADQLANRGVD (142 aa)). The Mg(2+) site is built by Asp-10, Glu-48, Asp-70, and Asp-134. The disordered stretch occupies residues 129–148 (GNERADQLANRGVDEVRAKR).

It belongs to the RNase H family. Monomer. Mg(2+) is required as a cofactor.

Its subcellular location is the cytoplasm. The enzyme catalyses Endonucleolytic cleavage to 5'-phosphomonoester.. Endonuclease that specifically degrades the RNA of RNA-DNA hybrids. This chain is Ribonuclease H, found in Pseudomonas putida (strain W619).